The chain runs to 245 residues: 8-amino-3,8-dideoxy-manno-octulosonate cytidylyltransferase (245 aa).

It belongs to the KdsB family.

It is found in the cytoplasm. It catalyses the reaction 8-amino-3,8-dideoxy-alpha-D-manno-octulosonate + CTP = CMP-8-amino-3,8-dideoxy-alpha-D-manno-oct-2-ulosonate + diphosphate. The protein operates within bacterial outer membrane biogenesis; lipopolysaccharide biosynthesis. Functionally, activates KDO8N (a required 8-carbon sugar) for incorporation into bacterial lipopolysaccharide in the Shewanella genus. The polypeptide is 8-amino-3,8-dideoxy-manno-octulosonate cytidylyltransferase (Shewanella putrefaciens (strain CN-32 / ATCC BAA-453)).